The sequence spans 207 residues: Urease accessory protein UreG (207 aa).

A GTP-binding site is contributed by 14–21 (GPVGSGKT).

The protein belongs to the SIMIBI class G3E GTPase family. UreG subfamily. In terms of assembly, homodimer. UreD, UreF and UreG form a complex that acts as a GTP-hydrolysis-dependent molecular chaperone, activating the urease apoprotein by helping to assemble the nickel containing metallocenter of UreC. The UreE protein probably delivers the nickel.

It is found in the cytoplasm. Functionally, facilitates the functional incorporation of the urease nickel metallocenter. This process requires GTP hydrolysis, probably effectuated by UreG. This Pseudomonas putida (strain GB-1) protein is Urease accessory protein UreG.